We begin with the raw amino-acid sequence, 706 residues long: Probable protein S-acyltransferase 20 (706 aa).

A run of 2 helical transmembrane segments spans residues 16 to 36 and 41 to 61; these read VIAI…FAPF and IWEY…FVLY. A DHHC domain is found at 172–222; the sequence is LFCTLCNCEVRKFSKHCRSCDKCVDCFDHHCKWLNNCVGRKNYVTFVSLMS. Cys-202 functions as the S-palmitoyl cysteine intermediate in the catalytic mechanism. The next 2 helical transmembrane spans lie at 220–240 and 275–295; these read LMSA…AVIV and AVAI…MLLI. Disordered stretches follow at residues 470–505, 591–621, and 680–706; these read SSLS…HVHE, LNPS…ALRD, and RDST…SNIK. Polar residues-rich tracts occupy residues 492-501, 591-603, and 697-706; these read HGMSNLSSPS, LNPS…TQNP, and ANSQTGSNIK.

Belongs to the DHHC palmitoyltransferase family.

It localises to the cell membrane. It is found in the cytoplasmic vesicle membrane. It catalyses the reaction L-cysteinyl-[protein] + hexadecanoyl-CoA = S-hexadecanoyl-L-cysteinyl-[protein] + CoA. Palmitoyl acyltransferase. The protein is Probable protein S-acyltransferase 20 (PAT20) of Arabidopsis thaliana (Mouse-ear cress).